The sequence spans 783 residues: ATP-dependent 6-phosphofructokinase (783 aa).

The span at 1–10 (MAPPQAPVQP) shows a compositional bias: pro residues. Residues 1-20 (MAPPQAPVQPPKRRRIGVLT) form a disordered region. Residues 1-389 (MAPPQAPVQP…YHFSYINTST (389 aa)) form an N-terminal catalytic PFK domain 1 region. ATP-binding positions include G23, 86–87 (RC), and 116–119 (GDGS). D117 contributes to the Mg(2+) binding site. Residues 162-164 (SID), R199, 206-208 (MGR), E263, R291, and 297-300 (HTQR) each bind substrate. The active-site Proton acceptor is D164. Residues 390–403 (PDHPKLLLPENKRM) form an interdomain linker region. Positions 404–783 (RIGIIHVGAP…NATWSCYENA (380 aa)) are C-terminal regulatory PFK domain 2. Residues R480, 537-541 (TISNN), R575, 582-584 (QGG), E642, R668, 674-677 (HFQQ), and R749 each bind beta-D-fructose 2,6-bisphosphate.

Belongs to the phosphofructokinase type A (PFKA) family. ATP-dependent PFK group I subfamily. Eukaryotic two domain clade 'E' sub-subfamily. In terms of assembly, homotetramer. It depends on Mg(2+) as a cofactor.

Its subcellular location is the cytoplasm. The enzyme catalyses beta-D-fructose 6-phosphate + ATP = beta-D-fructose 1,6-bisphosphate + ADP + H(+). The protein operates within carbohydrate degradation; glycolysis; D-glyceraldehyde 3-phosphate and glycerone phosphate from D-glucose: step 3/4. With respect to regulation, allosterically activated by ADP, AMP, or fructose 2,6-bisphosphate, and allosterically inhibited by ATP or citrate. In terms of biological role, catalyzes the phosphorylation of D-fructose 6-phosphate to fructose 1,6-bisphosphate by ATP, the first committing step of glycolysis. The chain is ATP-dependent 6-phosphofructokinase (pfkA) from Aspergillus niger.